Here is a 219-residue protein sequence, read N- to C-terminus: 2-C-methyl-D-erythritol 4-phosphate cytidylyltransferase (219 aa).

The protein belongs to the IspD/TarI cytidylyltransferase family. IspD subfamily.

The catalysed reaction is 2-C-methyl-D-erythritol 4-phosphate + CTP + H(+) = 4-CDP-2-C-methyl-D-erythritol + diphosphate. The protein operates within isoprenoid biosynthesis; isopentenyl diphosphate biosynthesis via DXP pathway; isopentenyl diphosphate from 1-deoxy-D-xylulose 5-phosphate: step 2/6. Its function is as follows. Catalyzes the formation of 4-diphosphocytidyl-2-C-methyl-D-erythritol from CTP and 2-C-methyl-D-erythritol 4-phosphate (MEP). This chain is 2-C-methyl-D-erythritol 4-phosphate cytidylyltransferase, found in Chlamydia trachomatis serovar D (strain ATCC VR-885 / DSM 19411 / UW-3/Cx).